The sequence spans 478 residues: Protein adenylyltransferase VbhT (478 aa).

The Fido domain maps to 55-200 (FDLDHMKKIH…RRNLTEFTVN (146 aa)). ATP-binding positions include 85-88 (KDNS), 133-136 (NALH), 140-147 (EGNGRTLR), and serine 175.

As to quaternary structure, homodimer. Interacts with VbhA.

The enzyme catalyses L-tyrosyl-[protein] + ATP = O-(5'-adenylyl)-L-tyrosyl-[protein] + diphosphate. The catalysed reaction is L-threonyl-[protein] + ATP = 3-O-(5'-adenylyl)-L-threonyl-[protein] + diphosphate. Its activity is regulated as follows. Adenylyltransferase activity is inhibited by antitoxin VbhA; which acts by competing with ATP-binding at Arg-147 and prevents productive ATP-binding. In terms of biological role, toxic component of type II toxin-antitoxin (TA) system VbhT-VbhA. Adenylyltransferase involved in virulence by mediating the addition of adenosine 5'-monophosphate (AMP) to specific residue of host GTPases. The resulting AMPylation affects GTPases, impairing actin assembly in infected cells. The chain is Protein adenylyltransferase VbhT (vbhT) from Bartonella schoenbuchensis (strain DSM 13525 / NCTC 13165 / R1).